We begin with the raw amino-acid sequence, 130 residues long: Small ribosomal subunit protein uS9 (130 aa).

The protein belongs to the universal ribosomal protein uS9 family.

The sequence is that of Small ribosomal subunit protein uS9 from Aeromonas salmonicida (strain A449).